A 21-amino-acid chain; its full sequence is thr operon leader peptide (21 aa).

It belongs to the thr operon leader peptide family.

This protein is involved in control of the biosynthesis of threonine. This Salmonella choleraesuis (strain SC-B67) protein is thr operon leader peptide.